A 147-amino-acid polypeptide reads, in one-letter code: Bis(5'-nucleosyl)-tetraphosphatase [asymmetrical] (147 aa).

Ala-2 carries the post-translational modification N-acetylalanine. Residues 2-139 (ALRACGLIIF…DMKAVLQEGH (138 aa)) form the Nudix hydrolase domain. The Nudix box motif lies at 43-64 (GHVEPGESDLQTALRETQEEAG).

This sequence belongs to the Nudix hydrolase family. A divalent metal cation is required as a cofactor.

It carries out the reaction P(1),P(4)-bis(5'-guanosyl) tetraphosphate + H2O = GMP + GTP + 2 H(+). It catalyses the reaction a 5'-end CoA-ribonucleoside in mRNA + H2O = a 5'-end phospho-adenosine-phospho-ribonucleoside in mRNA + (R)-4'-phosphopantetheine + 2 H(+). The catalysed reaction is a 5'-end FAD-phospho-ribonucleoside in mRNA + H2O = a 5'-end phospho-adenosine-phospho-ribonucleoside in mRNA + FMN + 2 H(+). With respect to regulation, inhibited by fluoride ions. Its function is as follows. Catalyzes the asymmetric hydrolysis of diadenosine 5',5'''-P1,P4-tetraphosphate (Ap4A) to yield AMP and ATP. Exhibits decapping activity towards FAD-capped RNAs and dpCoA-capped RNAs in vitro. The polypeptide is Bis(5'-nucleosyl)-tetraphosphatase [asymmetrical] (NUDT2) (Sus scrofa (Pig)).